The chain runs to 587 residues: Arginine--tRNA ligase (587 aa).

Positions 127 to 137 match the 'HIGH' region motif; the sequence is PNLAKEMHVGH.

This sequence belongs to the class-I aminoacyl-tRNA synthetase family. As to quaternary structure, monomer.

The protein resides in the cytoplasm. It catalyses the reaction tRNA(Arg) + L-arginine + ATP = L-arginyl-tRNA(Arg) + AMP + diphosphate. This chain is Arginine--tRNA ligase, found in Pseudomonas aeruginosa (strain UCBPP-PA14).